Here is a 149-residue protein sequence, read N- to C-terminus: Large ribosomal subunit protein bL9 (149 aa).

This sequence belongs to the bacterial ribosomal protein bL9 family.

Its function is as follows. Binds to the 23S rRNA. The chain is Large ribosomal subunit protein bL9 from Helicobacter pylori (strain G27).